The chain runs to 374 residues: Spore germination protein B3 (374 aa).

A signal peptide spans 1-19 (MKTASKFSVMFFMLLALCG). C20 is lipidated: N-palmitoyl cysteine. C20 is lipidated: S-diacylglycerol cysteine.

Belongs to the GerABKC lipoprotein family.

It localises to the cell membrane. In terms of biological role, involved in the response to the germinative mixture of L-asparagine, glucose, fructose and potassium ions (AGFK). Cannot stimulate germination in the absence of gerD and gerK gene products (fructose and glucose receptors respectively). In Bacillus subtilis (strain 168), this protein is Spore germination protein B3 (gerBC).